A 356-amino-acid polypeptide reads, in one-letter code: Peptide chain release factor 1 (356 aa).

Position 233 is an N5-methylglutamine (Gln-233).

Belongs to the prokaryotic/mitochondrial release factor family. Methylated by PrmC. Methylation increases the termination efficiency of RF1.

The protein localises to the cytoplasm. Its function is as follows. Peptide chain release factor 1 directs the termination of translation in response to the peptide chain termination codons UAG and UAA. The polypeptide is Peptide chain release factor 1 (Oceanobacillus iheyensis (strain DSM 14371 / CIP 107618 / JCM 11309 / KCTC 3954 / HTE831)).